The sequence spans 251 residues: Cell division protein ZapD (251 aa).

Belongs to the ZapD family. Interacts with FtsZ.

Its subcellular location is the cytoplasm. Cell division factor that enhances FtsZ-ring assembly. Directly interacts with FtsZ and promotes bundling of FtsZ protofilaments, with a reduction in FtsZ GTPase activity. This is Cell division protein ZapD from Azoarcus sp. (strain BH72).